Here is a 166-residue protein sequence, read N- to C-terminus: Large ribosomal subunit protein uL10 (166 aa).

It belongs to the universal ribosomal protein uL10 family. Part of the ribosomal stalk of the 50S ribosomal subunit. The N-terminus interacts with L11 and the large rRNA to form the base of the stalk. The C-terminus forms an elongated spine to which L12 dimers bind in a sequential fashion forming a multimeric L10(L12)X complex.

In terms of biological role, forms part of the ribosomal stalk, playing a central role in the interaction of the ribosome with GTP-bound translation factors. The sequence is that of Large ribosomal subunit protein uL10 from Staphylococcus aureus (strain JH1).